Reading from the N-terminus, the 2357-residue chain is Protein transport protein Sec16A (2357 aa).

Disordered stretches follow at residues 1–225 (MQPP…SYQH), 240–347 (QAAS…AHHP), 394–463 (SFSS…GTGT), 504–562 (YGPL…ARPQ), 579–630 (DTSG…TSAN), 666–689 (KRRA…DNME), 714–739 (TAGT…GPVK), 778–820 (SEVV…PPKV), 917–1008 (VTGA…QEEA), 1023–1055 (PVRM…LHNQ), and 1076–1151 (QPEL…AAVR). Composition is skewed to polar residues over residues 57–75 (NRQT…SSLP) and 94–104 (TPTNAGDSSTG). The span at 208–221 (MPGQWGPAQGGPQP) shows a compositional bias: low complexity. Residues 281–290 (VHQQSKNHPL) show a composition bias toward polar residues. S311 carries the post-translational modification Phosphoserine. The span at 333–342 (PFTQGNSPEN) shows a compositional bias: polar residues. Residues 540-561 (PDSVSSSYSSHSHRSPPGSARP) are compositionally biased toward low complexity. Phosphoserine is present on residues S581, S591, S609, S611, and S614. The segment covering 581-590 (SGSFFKQIDS) has biased composition (polar residues). T615 carries the phosphothreonine modification. At S617 the chain carries Phosphoserine. Polar residues-rich tracts occupy residues 921–959 (SLPS…QTPQ), 972–997 (FVSS…PNSN), and 1029–1041 (PSPS…QQPL). The segment at 1037–1905 (SQQPLPNHPR…QHVERQIQEG (869 aa)) is required for localization to endoplasmic reticulum exit sites. S1087 carries the phosphoserine modification. The interaction with MIA3 stretch occupies residues 1118–1415 (ASPASVNTGQ…EAPHAPGSFH (298 aa)). Positions 1119–1420 (SPASVNTGQL…PGSFHGDYAY (302 aa)) are required for endoplasmic reticulum localization. Residues 1134 to 1150 (QASSASVTSTNSSQAAV) show a composition bias toward low complexity. Residue S1223 is modified to Phosphoserine. Residues 1226-1253 (AENHRYSEPERPSSRASHYSDQLAPRQG) form a disordered region. Positions 1227–1238 (ENHRYSEPERPS) are enriched in basic and acidic residues. S1245 is modified (phosphoserine). Phosphothreonine is present on T1340. Residues S1342, S1362, S1365, S1371, S1374, S1377, S1384, S1588, and S1616 each carry the phosphoserine modification. The segment at 1344 to 1395 (DDDAEIHRDPYGEEADRRSIHSEHSARSLRSTHSLPSRRSSLSSHSHQSQIY) is disordered. Residues 1348 to 1369 (EIHRDPYGEEADRRSIHSEHSA) are compositionally biased toward basic and acidic residues. Positions 1371–1392 (SLRSTHSLPSRRSSLSSHSHQS) are enriched in low complexity. The segment at 1449–1905 (QVPSRPTSPE…QHVERQIQEG (457 aa)) is central conserved domain (CCD); mediates interaction with RNF183, LRRK2 and SEC13. Residues 1907 to 1943 (VLWSQDGTEPQQCRITSGSEVEQSDGPGLNQQAGPQA) are disordered. Residues 1908-1927 (LWSQDGTEPQQCRITSGSEV) show a composition bias toward polar residues. Position 1922 is a phosphothreonine (T1922). Residues S1951, S2043, S2063, S2077, and S2094 each carry the phosphoserine modification. 3 disordered regions span residues 1993–2141 (ELSP…RTEA), 2156–2198 (KKNQ…PTAS), and 2240–2357 (PLPI…AALN). A compositionally biased stretch (polar residues) spans 2092 to 2105 (GSSSLTRAPSLTSD). The span at 2106-2126 (SEGKKPAQAVKKEPKEPKKTE) shows a compositional bias: basic and acidic residues. Positions 2126 to 2357 (ESWFSRWLPG…IGQRKYAALN (232 aa)) are required for interaction with SEC23A. S2291 carries the phosphoserine modification. A compositionally biased stretch (polar residues) spans 2332–2343 (QLVQASVTSGNS).

Belongs to the SEC16 family. In terms of assembly, SEC16A and SEC16B are each present in multiple copies in a heteromeric complex. Interacts with SEC23A. Interacts with RNF183, RNF152, MIA3 and SEC13. Interacts with GORASP2 in response to ER stress. Interacts with LRRK2 (via ROC domain). Interacts with RAB10.

It is found in the endoplasmic reticulum membrane. The protein localises to the golgi apparatus membrane. Its subcellular location is the cytoplasm. The protein resides in the perinuclear region. It localises to the cytosol. It is found in the microsome membrane. Its function is as follows. Acts as a molecular scaffold that plays a key role in the organization of the endoplasmic reticulum exit sites (ERES), also known as transitional endoplasmic reticulum (tER). SAR1A-GTP-dependent assembly of SEC16A on the ER membrane forms an organized scaffold defining an ERES. Required for secretory cargo traffic from the endoplasmic reticulum to the Golgi apparatus. Mediates the recruitment of MIA3/TANGO to ERES. Regulates both conventional (ER/Golgi-dependent) and GORASP2-mediated unconventional (ER/Golgi-independent) trafficking of CFTR to cell membrane. Acts as a RAB10 effector in the regulation of insulin-induced SLC2A4/GLUT4 glucose transporter-enriched vesicles delivery to the plasma membrane in adipocytes. The protein is Protein transport protein Sec16A (Sec16a) of Mus musculus (Mouse).